We begin with the raw amino-acid sequence, 390 residues long: 8-amino-7-oxononanoate synthase (390 aa).

Substrate is bound at residue Arg-19. 106–107 contacts pyridoxal 5'-phosphate; sequence GY. A substrate-binding site is contributed by His-131. The pyridoxal 5'-phosphate site is built by Ser-176, His-204, and Thr-233. N6-(pyridoxal phosphate)lysine is present on Lys-236. Thr-350 is a substrate binding site.

It belongs to the class-II pyridoxal-phosphate-dependent aminotransferase family. BioF subfamily. Homodimer. Pyridoxal 5'-phosphate serves as cofactor.

The enzyme catalyses 6-carboxyhexanoyl-[ACP] + L-alanine + H(+) = (8S)-8-amino-7-oxononanoate + holo-[ACP] + CO2. Its pathway is cofactor biosynthesis; biotin biosynthesis. In terms of biological role, catalyzes the decarboxylative condensation of pimeloyl-[acyl-carrier protein] and L-alanine to produce 8-amino-7-oxononanoate (AON), [acyl-carrier protein], and carbon dioxide. The polypeptide is 8-amino-7-oxononanoate synthase (Pseudomonas entomophila (strain L48)).